The sequence spans 514 residues: Threonine synthase (514 aa).

N6-(pyridoxal phosphate)lysine is present on K117. Pyridoxal 5'-phosphate-binding residues include G270, N271, F272, and D274. Phosphoserine is present on residues S319 and S321. Residue T449 coordinates pyridoxal 5'-phosphate.

The protein belongs to the threonine synthase family. It depends on pyridoxal 5'-phosphate as a cofactor.

The catalysed reaction is O-phospho-L-homoserine + H2O = L-threonine + phosphate. Its pathway is amino-acid biosynthesis; L-threonine biosynthesis; L-threonine from L-aspartate: step 5/5. Catalyzes the gamma-elimination of phosphate from L-phosphohomoserine and the beta-addition of water to produce L-threonine. This chain is Threonine synthase (thrc), found in Schizosaccharomyces pombe (strain 972 / ATCC 24843) (Fission yeast).